The following is a 410-amino-acid chain: MAKGTYEGNKTHVNVGTIGHVDHGKTTLTSAITAVSSAMFPATVQKVAYDSVAKASESQGRRDPTKILTIATSHVEYESDNRHYAHVDCPGHADYIKNMITGAAQMDGAILVVSAEDGVMPQTKEHVLLSRQVGVNYIVVFLNKCDKLDDPEMAEIVEAEVIDVLDHYGFDGSKTPIIRGSAIKAIQAIEAGKDPRTDPDCKCILDLLNALDTYIPDPVREVDKDFLMSIEDVYSIPGRGTVVTGRIERGKIEKGNEVEIVGIRPTQKTTCTGVEMFKKEVVGIAGYNVGCLLRGIERKAVERGQVLAKPGTITPHKKFEAEVYILKKEEGGRHSGFVSGYRPQMYFRTTDVTGVINLQGDAQMIMPGDNANLTIELITPIAMEEKQRFAIREGGKTVGNGVVTKNIRII.

The region spanning 10-219 is the tr-type G domain; it reads KTHVNVGTIG…ALDTYIPDPV (210 aa). GTP contacts are provided by residues 19–26, 88–92, and 143–146; these read GHVDHGKT, DCPGH, and NKCD. Residue threonine 26 participates in Mg(2+) binding.

The protein belongs to the TRAFAC class translation factor GTPase superfamily. Classic translation factor GTPase family. EF-Tu/EF-1A subfamily. Monomer.

The protein resides in the cytoplasm. It carries out the reaction GTP + H2O = GDP + phosphate + H(+). Functionally, GTP hydrolase that promotes the GTP-dependent binding of aminoacyl-tRNA to the A-site of ribosomes during protein biosynthesis. In Brachyspira hyodysenteriae (Treponema hyodysenteriae), this protein is Elongation factor Tu.